Consider the following 201-residue polypeptide: Peptide deformylase (201 aa).

The tract at residues 1–24 (MANHFSQLAKKSKTNGNSEKIAKE) is disordered. Cysteine 121 and histidine 163 together coordinate Fe cation. Residue glutamate 164 is part of the active site. Histidine 167 lines the Fe cation pocket.

It belongs to the polypeptide deformylase family. Requires Fe(2+) as cofactor.

It carries out the reaction N-terminal N-formyl-L-methionyl-[peptide] + H2O = N-terminal L-methionyl-[peptide] + formate. Functionally, removes the formyl group from the N-terminal Met of newly synthesized proteins. Requires at least a dipeptide for an efficient rate of reaction. N-terminal L-methionine is a prerequisite for activity but the enzyme has broad specificity at other positions. This Prochlorococcus marinus (strain MIT 9312) protein is Peptide deformylase.